A 645-amino-acid polypeptide reads, in one-letter code: 1,4-alpha-glucan branching enzyme GlgB (645 aa).

Asp309 (nucleophile) is an active-site residue. Catalysis depends on Glu352, which acts as the Proton donor. The disordered stretch occupies residues 619–645 (VKTRKGSKKQDGSKTKVRSNVTSRGKR). The segment covering 636-645 (RSNVTSRGKR) has biased composition (polar residues).

This sequence belongs to the glycosyl hydrolase 13 family. GlgB subfamily. In terms of assembly, monomer.

The enzyme catalyses Transfers a segment of a (1-&gt;4)-alpha-D-glucan chain to a primary hydroxy group in a similar glucan chain.. Its pathway is glycan biosynthesis; glycogen biosynthesis. Catalyzes the formation of the alpha-1,6-glucosidic linkages in glycogen by scission of a 1,4-alpha-linked oligosaccharide from growing alpha-1,4-glucan chains and the subsequent attachment of the oligosaccharide to the alpha-1,6 position. The chain is 1,4-alpha-glucan branching enzyme GlgB from Bacillus cereus (strain AH187).